Here is a 200-residue protein sequence, read N- to C-terminus: Protein GrpE (200 aa).

Basic and acidic residues predominate over residues 1–12 (MSNEEIKNKDEQ). The segment at 1–30 (MSNEEIKNKDEQLQQDAVETEAEVVGTDAD) is disordered.

This sequence belongs to the GrpE family. As to quaternary structure, homodimer.

It localises to the cytoplasm. In terms of biological role, participates actively in the response to hyperosmotic and heat shock by preventing the aggregation of stress-denatured proteins, in association with DnaK and GrpE. It is the nucleotide exchange factor for DnaK and may function as a thermosensor. Unfolded proteins bind initially to DnaJ; upon interaction with the DnaJ-bound protein, DnaK hydrolyzes its bound ATP, resulting in the formation of a stable complex. GrpE releases ADP from DnaK; ATP binding to DnaK triggers the release of the substrate protein, thus completing the reaction cycle. Several rounds of ATP-dependent interactions between DnaJ, DnaK and GrpE are required for fully efficient folding. This chain is Protein GrpE, found in Vibrio cholerae serotype O1 (strain ATCC 39315 / El Tor Inaba N16961).